A 381-amino-acid chain; its full sequence is Magnesium transporter MRS2-I (381 aa).

Transmembrane regions (helical) follow at residues 316 to 336 (LFLS…GIFG) and 353 to 373 (WVVL…VAYA). Residues 336–338 (GMN) carry the Required for magnesium transport activity motif.

This sequence belongs to the CorA metal ion transporter (MIT) (TC 1.A.35.5) family.

The protein resides in the membrane. Magnesium transporter that may mediate the influx of magnesium. This Oryza sativa subsp. indica (Rice) protein is Magnesium transporter MRS2-I (MRS2-I).